The primary structure comprises 329 residues: MPTSRPFVLTPGEPAGIGPDLCLLLARQAQPRPLVAIASRALLAQRAEQLGLSIELRDAGPQDWPGEPAPANCLYVWDTPLATAVTAGQLDPRNAHYVLETLTRAGRGCLDGSFAGIITAPVHKGVINEAGIPFSGHTEFLAELTLTEQVVMMLATRGLRVALVTTHLPLRDVAEAITAERLQRVTRILHADLVSKFGIARPRILVCGLNPHAGEGGHLGREEIEVIEPTLAGLREEGIELIGPLPADTLFTPKHLEHCDAVLAMYHDQGLPVLKYKGFGAAVNVTLGLPIVRTSVDHGTALDLAGTGRVDIGSLQVALETAYQMSGAA.

Substrate is bound by residues H137 and T138. H167, H212, and H267 together coordinate a divalent metal cation. The substrate site is built by K275, N284, and R293.

The protein belongs to the PdxA family. In terms of assembly, homodimer. The cofactor is Zn(2+). It depends on Mg(2+) as a cofactor. Co(2+) serves as cofactor.

Its subcellular location is the cytoplasm. It catalyses the reaction 4-(phosphooxy)-L-threonine + NAD(+) = 3-amino-2-oxopropyl phosphate + CO2 + NADH. The protein operates within cofactor biosynthesis; pyridoxine 5'-phosphate biosynthesis; pyridoxine 5'-phosphate from D-erythrose 4-phosphate: step 4/5. In terms of biological role, catalyzes the NAD(P)-dependent oxidation of 4-(phosphooxy)-L-threonine (HTP) into 2-amino-3-oxo-4-(phosphooxy)butyric acid which spontaneously decarboxylates to form 3-amino-2-oxopropyl phosphate (AHAP). The sequence is that of 4-hydroxythreonine-4-phosphate dehydrogenase from Stutzerimonas stutzeri (strain A1501) (Pseudomonas stutzeri).